We begin with the raw amino-acid sequence, 607 residues long: Terpenoid synthase 9 (607 aa).

The Mg(2+) site is built by aspartate 356, aspartate 360, asparagine 501, and aspartate 509. The short motif at 356 to 360 (DDTFD) is the DDXXD motif element.

Belongs to the terpene synthase family. Tpsa subfamily. Mg(2+) serves as cofactor. It depends on Mn(2+) as a cofactor. Predominantly expressed in roots but also in stems, leaves and flowers.

The protein resides in the cytoplasm. Its pathway is secondary metabolite biosynthesis; terpenoid biosynthesis. Functionally, involved in terpene biosynthesis in roots. Possesses diterpene (C20) synthase activity in vitro. Does not seem to be involved in sesquiterpene (C15) biosynthesis. The chain is Terpenoid synthase 9 from Arabidopsis thaliana (Mouse-ear cress).